A 396-amino-acid polypeptide reads, in one-letter code: L-lactate dehydrogenase (396 aa).

An FMN hydroxy acid dehydrogenase domain is found at 1–380; sequence MIISAASDYR…SGDSLVQELG (380 aa). Tyrosine 24 lines the substrate pocket. Serine 106 and glutamine 127 together coordinate FMN. Tyrosine 129 contacts substrate. Position 155 (threonine 155) interacts with FMN. Arginine 164 is a binding site for substrate. Lysine 251 is a binding site for FMN. Histidine 275 serves as the catalytic Proton acceptor. Arginine 278 contacts substrate. Position 306–330 (306–330) interacts with FMN; sequence DSGIRNGLDVVRMIALGADTVLLGR.

This sequence belongs to the FMN-dependent alpha-hydroxy acid dehydrogenase family. The cofactor is FMN.

Its subcellular location is the cell inner membrane. It catalyses the reaction (S)-lactate + A = pyruvate + AH2. Functionally, catalyzes the conversion of L-lactate to pyruvate. Is coupled to the respiratory chain. This Salmonella heidelberg (strain SL476) protein is L-lactate dehydrogenase.